A 150-amino-acid polypeptide reads, in one-letter code: Large ribosomal subunit protein uL11 (150 aa).

It belongs to the universal ribosomal protein uL11 family. As to quaternary structure, part of the ribosomal stalk of the 50S ribosomal subunit. Interacts with L10 and the large rRNA to form the base of the stalk. L10 forms an elongated spine to which L12 dimers bind in a sequential fashion forming a multimeric L10(L12)X complex. In terms of processing, one or more lysine residues are methylated.

In terms of biological role, forms part of the ribosomal stalk which helps the ribosome interact with GTP-bound translation factors. This Ureaplasma urealyticum serovar 10 (strain ATCC 33699 / Western) protein is Large ribosomal subunit protein uL11.